The sequence spans 448 residues: Homogentisate 1,2-dioxygenase (448 aa).

Residue His-303 is the Proton acceptor of the active site. Residues His-346 and Glu-352 each contribute to the Fe cation site. Homogentisate-binding residues include Tyr-361 and His-382. His-382 provides a ligand contact to Fe cation.

The protein belongs to the homogentisate dioxygenase family. Hexamer; dimer of trimers. Requires Fe cation as cofactor.

It catalyses the reaction homogentisate + O2 = 4-maleylacetoacetate + H(+). It participates in amino-acid degradation; L-phenylalanine degradation; acetoacetate and fumarate from L-phenylalanine: step 4/6. Involved in the catabolism of homogentisate (2,5-dihydroxyphenylacetate or 2,5-OH-PhAc), a central intermediate in the degradation of phenylalanine and tyrosine. Catalyzes the oxidative ring cleavage of the aromatic ring of homogentisate to yield maleylacetoacetate. In Nitrobacter hamburgensis (strain DSM 10229 / NCIMB 13809 / X14), this protein is Homogentisate 1,2-dioxygenase.